A 342-amino-acid chain; its full sequence is Farnesyl pyrophosphate synthase 2 (342 aa).

Residues Lys48, Arg51, and Gln86 each contribute to the isopentenyl diphosphate site. Residues Asp93 and Asp97 each contribute to the Mg(2+) site. Dimethylallyl diphosphate is bound at residue Arg102. Arg103 serves as a coordination point for isopentenyl diphosphate. Dimethylallyl diphosphate is bound by residues Lys190, Thr191, Gln229, Lys246, and Lys255.

Belongs to the FPP/GGPP synthase family. The cofactor is Mg(2+).

Its subcellular location is the cytoplasm. It carries out the reaction isopentenyl diphosphate + dimethylallyl diphosphate = (2E)-geranyl diphosphate + diphosphate. It catalyses the reaction isopentenyl diphosphate + (2E)-geranyl diphosphate = (2E,6E)-farnesyl diphosphate + diphosphate. Its pathway is isoprenoid biosynthesis; farnesyl diphosphate biosynthesis; farnesyl diphosphate from geranyl diphosphate and isopentenyl diphosphate: step 1/1. It functions in the pathway isoprenoid biosynthesis; geranyl diphosphate biosynthesis; geranyl diphosphate from dimethylallyl diphosphate and isopentenyl diphosphate: step 1/1. In terms of biological role, catalyzes the sequential condensation of isopentenyl pyrophosphate with the allylic pyrophosphates, dimethylallyl pyrophosphate, and then with the resultant geranylpyrophosphate to the ultimate product farnesyl pyrophosphate. The polypeptide is Farnesyl pyrophosphate synthase 2 (FPS2) (Parthenium argentatum (Guayule rubber plant)).